The primary structure comprises 143 residues: Large-conductance mechanosensitive channel (143 aa).

Helical transmembrane passes span 10–30, 40–60, and 86–106; these read FAIK…GAFG, IIMP…QKFI, and GNFL…FLMV.

Belongs to the MscL family. As to quaternary structure, homopentamer.

Its subcellular location is the cell inner membrane. Functionally, channel that opens in response to stretch forces in the membrane lipid bilayer. May participate in the regulation of osmotic pressure changes within the cell. This Acinetobacter baumannii (strain ATCC 17978 / DSM 105126 / CIP 53.77 / LMG 1025 / NCDC KC755 / 5377) protein is Large-conductance mechanosensitive channel.